The chain runs to 542 residues: Chaperonin GroEL (542 aa).

ATP-binding positions include 29–32 (TLGP), 86–90 (DGTTT), Gly-413, 476–478 (NAA), and Asp-492. A disordered region spans residues 521 to 542 (QPDENGPAAGPDMGMGGMGGMM). The segment covering 533–542 (MGMGGMGGMM) has biased composition (gly residues).

It belongs to the chaperonin (HSP60) family. Forms a cylinder of 14 subunits composed of two heptameric rings stacked back-to-back. Interacts with the co-chaperonin GroES.

It localises to the cytoplasm. It catalyses the reaction ATP + H2O + a folded polypeptide = ADP + phosphate + an unfolded polypeptide.. Its function is as follows. Together with its co-chaperonin GroES, plays an essential role in assisting protein folding. The GroEL-GroES system forms a nano-cage that allows encapsulation of the non-native substrate proteins and provides a physical environment optimized to promote and accelerate protein folding. The chain is Chaperonin GroEL from Listeria innocua serovar 6a (strain ATCC BAA-680 / CLIP 11262).